The chain runs to 783 residues: Rho GTPase-activating protein gacR (783 aa).

Positions 138 to 188 (AKNRFDKARLSFDEASEQFKQLRKKQNNINNEKLLEAEEDLDYATQQFSDI) form a coiled coil. The interval 262–299 (QFEQTNSSRTISLPPPPPPKPTSSTPSSSPSPSPSSSI) is disordered. Over residues 283–299 (TSSTPSSSPSPSPSSSI) the composition is skewed to low complexity. The 191-residue stretch at 319-509 (MALSTITERE…FIISNFNNIF (191 aa)) folds into the Rho-GAP domain. The segment covering 527–539 (GSSGGGGGGGSSG) has biased composition (gly residues). A disordered region spans residues 527–745 (GSSGGGGGGG…TTNSRPLSNS (219 aa)). 4 stretches are compositionally biased toward low complexity: residues 568 to 589 (SVNTSSSQSSSSSSSSSFASSA), 599 to 630 (PSSSSSPIITTTSPNSNTNINSNTSVNTNINP), 641 to 651 (PKKISSSSNSL), and 661 to 698 (SIPEKSQNNITPTILSSSLSAPTSPTTTTTTNPLRSST). The span at 706–738 (NRVSMYLQNSNTGVPLPSQKPQRVISNNNTTTN) shows a compositional bias: polar residues.

Its subcellular location is the cytoplasm. In terms of biological role, rho GTPase-activating protein involved in the signal transduction pathway. The chain is Rho GTPase-activating protein gacR (gacR) from Dictyostelium discoideum (Social amoeba).